We begin with the raw amino-acid sequence, 123 residues long: Putative membrane protein insertion efficiency factor (123 aa).

The protein belongs to the UPF0161 family.

It localises to the cell inner membrane. Could be involved in insertion of integral membrane proteins into the membrane. In Beijerinckia indica subsp. indica (strain ATCC 9039 / DSM 1715 / NCIMB 8712), this protein is Putative membrane protein insertion efficiency factor.